The following is a 392-amino-acid chain: Formate-dependent phosphoribosylglycinamide formyltransferase (392 aa).

N(1)-(5-phospho-beta-D-ribosyl)glycinamide is bound by residues 20 to 21 (EL) and Glu-80. ATP is bound by residues Arg-112, Lys-153, 158 to 163 (SSGKGQ), 193 to 196 (EGFV), and Glu-201. Positions 117 to 306 (RLAAETLGLP…EFALHVRAIL (190 aa)) constitute an ATP-grasp domain. Mg(2+)-binding residues include Glu-265 and Glu-277. N(1)-(5-phospho-beta-D-ribosyl)glycinamide is bound by residues Asp-284, Lys-355, and 362-363 (RR).

Belongs to the PurK/PurT family. In terms of assembly, homodimer.

The enzyme catalyses N(1)-(5-phospho-beta-D-ribosyl)glycinamide + formate + ATP = N(2)-formyl-N(1)-(5-phospho-beta-D-ribosyl)glycinamide + ADP + phosphate + H(+). It participates in purine metabolism; IMP biosynthesis via de novo pathway; N(2)-formyl-N(1)-(5-phospho-D-ribosyl)glycinamide from N(1)-(5-phospho-D-ribosyl)glycinamide (formate route): step 1/1. In terms of biological role, involved in the de novo purine biosynthesis. Catalyzes the transfer of formate to 5-phospho-ribosyl-glycinamide (GAR), producing 5-phospho-ribosyl-N-formylglycinamide (FGAR). Formate is provided by PurU via hydrolysis of 10-formyl-tetrahydrofolate. The sequence is that of Formate-dependent phosphoribosylglycinamide formyltransferase from Aeromonas hydrophila subsp. hydrophila (strain ATCC 7966 / DSM 30187 / BCRC 13018 / CCUG 14551 / JCM 1027 / KCTC 2358 / NCIMB 9240 / NCTC 8049).